Consider the following 367-residue polypeptide: C-X-C chemokine receptor type 3 (367 aa).

At 1 to 56 the chain is on the extracellular side; sequence MYLEVSERQVLDASDIAFLLENSTSPYDYGENESDFSDSPPCPQDFSLNFDRTFLP. N-linked (GlcNAc...) asparagine glycosylation occurs at Asn22. Sulfotyrosine occurs at positions 27 and 29. The N-linked (GlcNAc...) asparagine glycan is linked to Asn32. A helical transmembrane segment spans residues 57 to 77; that stretch reads VLYSLLFLLGLLGNGAVAAVL. Residues 78 to 89 are Cytoplasmic-facing; it reads LSQRTALSSTDT. The helical transmembrane segment at 90–110 threads the bilayer; the sequence is FLLHLAVADVLLVLTLPLWAV. Residues 111 to 125 are Extracellular-facing; it reads DAAAQWVFGSGLCKV. Cys123 and Cys202 are disulfide-bonded. The helical transmembrane segment at 126-146 threads the bilayer; it reads AGALFNINFYAGAFLLACISF. Topologically, residues 147-168 are cytoplasmic; that stretch reads DRYLSIVHATQIYRRDPWVRVA. The chain crosses the membrane as a helical span at residues 169-189; sequence LTCIVVWGLCVLFALPDFIFL. Residues 190 to 222 are Extracellular-facing; the sequence is SASHDQRLNATHCQYNFPQVGRTALRVLQLVAG. The N-linked (GlcNAc...) asparagine glycan is linked to Asn198. Residues 223–243 traverse the membrane as a helical segment; sequence FLMPLLVMAYCYAHILAVLLV. Residues 244-255 are Cytoplasmic-facing; that stretch reads SRGQRRFRAMRL. A helical transmembrane segment spans residues 256–276; that stretch reads VVVVVVAFAVCWTPYHLVVLV. Residues 277–300 are Extracellular-facing; that stretch reads DILMDVGVLARNCGRESHVDVAKS. The helical transmembrane segment at 301 to 321 threads the bilayer; sequence VTSGMGYMHCCLNPLLYAFVG. Residues 322–367 are Cytoplasmic-facing; the sequence is VKFKEQMWMLLMRLGRSDQRGPQRQPSSSRRESSWSETTEASYLGL. Residues 339 to 367 are disordered; the sequence is DQRGPQRQPSSSRRESSWSETTEASYLGL.

The protein belongs to the G-protein coupled receptor 1 family. Homomer. Forms heteromers with ACKR4. Interacts with PF4/CXCL4. In terms of processing, sulfation on Tyr-27 and Tyr-29 is essential for CXCL10 binding. Post-translationally, N-glycosylated.

The protein resides in the cell membrane. Its function is as follows. Receptor for the C-X-C chemokine CXCL9, CXCL10 and CXCL11 and mediates the proliferation, survival and angiogenic activity of mesangial cells through a heterotrimeric G-protein signaling pathway. Probably promotes cell chemotaxis response. Binds to CCL21. Upon activation by PF4, induces activated T-lymphocytes migration mediated via downstream Ras/extracellular signal-regulated kinase (ERK) signaling. The chain is C-X-C chemokine receptor type 3 (Cxcr3) from Rattus norvegicus (Rat).